We begin with the raw amino-acid sequence, 490 residues long: MVEQSDRAPLLDWEEIPPAELAPSVPSPDTGDSLQSGLSSYPTEATLGADITLNTSPTRPSSVAAVHSPHKQHSGPGGDALAEEDEPGDCAFHGLSVRDRRITGWEEKDQIVAVFVVTFDTRSGNMIEWCLPHDVNLEGVEFKSMASGSHRISSDFIYFRKGCYFGLACFANMPVESELERGARMKSVGILSPSYTLLYRYMHFLENQVRHQLQCPGQYSPLEAFYEDKKAVLPSGGNGLVTACPTSALAPIVNRCMHPEMKITHPAGCMSQFIRFFGEQIMVLWKFALLRKRILIFSPPPVGVVCYRVYCCCCLANVSIPGMGVSVPEFRPFFYINVADIPALETELSYVACTTEKIFEEKKELYDVYIDNQNVKTHRESLQPLLRLNSADREKYRKLCEQRQLLLYSQEVDGDCTSNEEDLFILFFMEQNNRIFQTLSEVAVSADPTLTAEHVRAMGLDPQGDRGFLVDLLEIYGIDVMLVIDNPCCP.

Residues 1–86 (MVEQSDRAPL…GGDALAEEDE (86 aa)) form a disordered region. One can recognise a uDENN domain in the interval 19-221 (AELAPSVPSP…QLQCPGQYSP (203 aa)). 2 stretches are compositionally biased toward polar residues: residues 30–43 (TGDS…SYPT) and 52–61 (TLNTSPTRPS). The 149-residue stretch at 249–397 (LAPIVNRCMH…LNSADREKYR (149 aa)) folds into the cDENN domain. A dDENN domain is found at 399 to 490 (LCEQRQLLLY…MLVIDNPCCP (92 aa)).

Belongs to the DENND11 family.

Probable guanine nucleotide exchange factor (GEF). May promote the exchange of GDP to GTP, converting inactive GDP-bound small GTPases into their active GTP-bound form. The polypeptide is DENN domain-containing protein 11 (dennd11) (Danio rerio (Zebrafish)).